A 1300-amino-acid chain; its full sequence is MVVGSNHTRRGETGSRFTNSSSSSSTSGGPTASASSTTSVTSSLATNSTSTSTAAALLSSMSHKSHGPPPSAPPSAHHQTNQQHHQVAHSQPHATHYQQTNQHPSHHHQSHQSSNGSGGGSAGSGSGSGSVVSGLNGCNGSAVSRLSQSTGMSPRELSENDDLATSLILDPHLGFQTHKMNIRFRPLKVDTQQLKAIVDDFIHTQNYDIAIQRIYEGPWIPRHLKNKNKIATKRLHDHIVRYLRVFDKDSGFAIEACYRYTLEEQRGAKISSTKRWSKNDKIECLVGCIAELTEAEEAALLHSGKNDFSVMYSCRKNCAQLWLGPAAYINHDCRANCKFLATGRDTACVKVLRDIEVGEEITCFYGEDFFGDSNRYCECETCERRGTGAFAGKDDGLMLGLSMGLGLASSGPGNNGGYRLRETDNRINRIKSRANSTNSTSNSNSNTNDSTGPSETSSTNGLVASGGAGGATGAAMLPTPSQQSTGGKEATAAVSLLEKKLPNVVVSPLTMKELRQKGMTKYDAEMIMANAAYQQQHHHQHHFHHHHHHHHHHHNHGQHASTGAEATAAVQQMAAMQKPGVGGTGAAGNAGATTVSSVAAGAGSEVNGGRSTSLRKSMRVNSTSSSISTASADEVIAPVVAASISLPSKAPVVLMPRCKPAQMAIAALHQSQQRQLRRSERQKEKLTDGESSDTSSEQQKKEQKQQDHQLPQKMFSLAEEPQPEKSEEKQQEQQKRVTRNSAGRVGLVARLATAHNNNIATTTNSSSSSNKATTITNCNNHNSNNSSRINHNSNLSSRLSVKSRKPAPSEASSIPSSTSSENQQQQATRRSCSPTPAYKKNLLASFDPDPPSTQGIKEQLKDESVTYSPVKQKRSRRAAALAAAQSIHCEALGGFPTGSTGSQRKRAQAGEPTTSCSSTTISNVEPLLKTPERRLKLTLRMKRSPILDEVIELGTSLSNGGAGRGAPGSHREGTAGEGSVRSALNLTGSSSNGIEYEILRMEGISEHGNDDDEDEEEDDEEPAAEEEEEPPPKEELQLVNKKQRKKQRSRSRSSQRRSPAPSSVYGTPQKKRLRLIFGNESHTIDIPPAAAEGSGSGLDDLNSSGGGGDESFNASYASSTSLTVNTSSSSTSSSSGVGGATSTSAEPVDSSTVGPPIAAQSPSSTTSSSFQSACTSTTNSNSYFPNGKQRAAGEDSYAMHYYQLGKFAGTPSPGQGQAIVSSSSGSSGGGGSGAGFLSMPKHTFGTCALLAPTSFACLQNQPQISQQKTSSGGGAGVVPTSTSTGAVTSHHHTNNHHGQK.

The interval 1–136 is disordered; sequence MVVGSNHTRR…GSGSVVSGLN (136 aa). The span at 14-62 shows a compositional bias: low complexity; that stretch reads GSRFTNSSSSSSTSGGPTASASSTTSVTSSLATNSTSTSTAAALLSSMS. Polar residues predominate over residues 79–97; that stretch reads QTNQQHHQVAHSQPHATHY. Over residues 116–128 the composition is skewed to gly residues; the sequence is GSGGGSAGSGSGS. One can recognise an SET domain in the interval 255-366; sequence EACYRYTLEE…VGEEITCFYG (112 aa). 5 disordered regions span residues 432 to 490, 535 to 574, 669 to 744, 756 to 856, and 891 to 927; these read SRAN…GKEA, QQHHHQHHFHHHHHHHHHHHNHGQHASTGAEATAAVQQMA, HQSQ…SAGR, NNNI…TQGI, and ALGGFPTGSTGSQRKRAQAGEPTTSCSSTTISNVEPL. The span at 435 to 451 shows a compositional bias: low complexity; it reads NSTNSTSNSNSNTNDST. Residues 452 to 462 are compositionally biased toward polar residues; the sequence is GPSETSSTNGL. The span at 536–557 shows a compositional bias: basic residues; that stretch reads QHHHQHHFHHHHHHHHHHHNHG. Over residues 564 to 574 the composition is skewed to low complexity; it reads AEATAAVQQMA. Composition is skewed to basic and acidic residues over residues 677–688, 698–707, and 722–735; these read RRSERQKEKLTD, QQKKEQKQQD, and QPEKSEEKQQEQQK. The span at 756–821 shows a compositional bias: low complexity; that stretch reads NNNIATTTNS…SSIPSSTSSE (66 aa). Composition is skewed to polar residues over residues 822–834 and 911–923; these read NQQQQATRRSCSP and EPTTSCSSTTISN. Phosphoserine occurs at positions 831 and 833. Phosphothreonine is present on T930. 4 disordered regions span residues 956 to 988, 1006 to 1188, 1212 to 1233, and 1263 to 1300; these read SLSNGGAGRGAPGSHREGTAGEGSVRSALNLTG, EHGN…PNGK, SPGQGQAIVSSSSGSSGGGGSG, and QISQQKTSSGGGAGVVPTSTSTGAVTSHHHTNNHHGQK. Residues 1009–1029 show a composition bias toward acidic residues; it reads NDDDEDEEEDDEEPAAEEEEE. Residues 1041–1055 are compositionally biased toward basic residues; sequence KKQRKKQRSRSRSSQ. Composition is skewed to low complexity over residues 1117–1145 and 1161–1178; these read ASSTSLTVNTSSSSTSSSSGVGGATSTSA and SPSSTTSSSFQSACTSTT. Residues 1289–1300 are compositionally biased toward basic residues; it reads SHHHTNNHHGQK.

The protein belongs to the class V-like SAM-binding methyltransferase superfamily. Histone-lysine methyltransferase family. Suvar4-20 subfamily.

It localises to the nucleus. The protein resides in the chromosome. It catalyses the reaction L-lysyl(20)-[histone H4] + S-adenosyl-L-methionine = N(6)-methyl-L-lysyl(20)-[histone H4] + S-adenosyl-L-homocysteine + H(+). The catalysed reaction is N(6)-methyl-L-lysyl(20)-[histone H4] + S-adenosyl-L-methionine = N(6),N(6)-dimethyl-L-lysyl(20)-[histone H4] + S-adenosyl-L-homocysteine + H(+). It carries out the reaction N(6),N(6)-dimethyl-L-lysyl(20)-[histone H4] + S-adenosyl-L-methionine = N(6),N(6),N(6)-trimethyl-L-lysyl(20)-[histone H4] + S-adenosyl-L-homocysteine + H(+). In terms of biological role, histone methyltransferase that specifically trimethylates 'Lys-20' of histone H4. H4 'Lys-20' trimethylation represents a specific tag for epigenetic transcriptional repression. Mainly functions in pericentric heterochromatin regions, thereby playing a central role in the establishment of constitutive heterochromatin in these regions. Acts as a dominant suppressor of position-effect variegation. This is Histone-lysine N-methyltransferase Suv4-20 (Hmt4-20) from Drosophila melanogaster (Fruit fly).